A 624-amino-acid polypeptide reads, in one-letter code: Ubiquitin carboxyl-terminal hydrolase 16 (624 aa).

The 575-residue stretch at 46 to 620 folds into the USP domain; that stretch reads VGLSNPANDC…EVYLLFYEIE (575 aa). Cysteine 55 acts as the Nucleophile in catalysis. Catalysis depends on histidine 424, which acts as the Proton acceptor. The tract at residues 453–573 is disordered; that stretch reads SENPSRVASP…ATDTEASASA (121 aa). A compositionally biased stretch (low complexity) spans 479–496; it reads SPPASTSTNSPLSLTPDS. The span at 518-544 shows a compositional bias: polar residues; it reads VSFQSTHSSSKQTISPTSAARNSSSLD. Positions 546-573 are enriched in low complexity; sequence ARLSSPASRSSLAERNASATDTEASASA.

The protein belongs to the peptidase C19 family.

The enzyme catalyses Thiol-dependent hydrolysis of ester, thioester, amide, peptide and isopeptide bonds formed by the C-terminal Gly of ubiquitin (a 76-residue protein attached to proteins as an intracellular targeting signal).. This Emericella nidulans (strain FGSC A4 / ATCC 38163 / CBS 112.46 / NRRL 194 / M139) (Aspergillus nidulans) protein is Ubiquitin carboxyl-terminal hydrolase 16 (ubp16).